The following is a 198-amino-acid chain: Putative glutathione S-transferase alpha-2 (198 aa).

S2 is modified (N-acetylserine). A GST N-terminal domain is found at 5 to 81 (SVPSLTYFQG…YIAKKHNFMG (77 aa)). Glutathione contacts are provided by residues Y11, R45, 52–53 (QL), and 65–66 (QS). The 116-residue stretch at 83–198 (NLEEEFLVDQ…YIKERPETKF (116 aa)) folds into the GST C-terminal domain.

This sequence belongs to the GST superfamily. Alpha family.

The catalysed reaction is RX + glutathione = an S-substituted glutathione + a halide anion + H(+). In terms of biological role, conjugation of reduced glutathione to a wide number of exogenous and endogenous hydrophobic electrophiles. The sequence is that of Putative glutathione S-transferase alpha-2 (gsta2-1) from Dictyostelium discoideum (Social amoeba).